Reading from the N-terminus, the 620-residue chain is MSGIAEFDGILDSLEHSKTGISGSKILKLTNLSMENVSENAQFVASVYKYAKRAPVTHKLGALYILDSIVRSFQDGAKKNNESFENPVDASFSGGWCKAAEITDSLVADAIQHAPSAHLPKILKLCDIWEKASTFPPEKLESLRSKLKDAMASTEPVSVDSAAAPSQSTNPEGNGGSVGSQAAAPTSRPVENDAASILEALAAFAQKAPVPSAAEESVSTPPQPAVAPSVSAVVPNLPVHPATAINAQSQSGNPLSNPLFQPSNVPQSIPSGPMGMKTGSVNDTQSQQITLMNVLASQNVPPAQIDSIMKAAFPNYNAPFQPAGVGSVPLPAPTSSQSLRLGSLHRSRSPSPRSGRPRRSPSPSHLSIPSTLPPADGVPKPTPDGFPRRFERDPTIPPDSIKVYSRTLFLGGITRSVREPVLRSMFERFGSVQSLILNHNYRHGFLKMFRRDAAEKAQVAMENVPFADTTIRTKWGVGFGPRECSDFSTGISVIPIRLLTDADRTWLVTAEYGGTGGLPITPGIALDEPDIEIGLGISSKAISKRGKDFAMRRDERFRGRKPYRGGPPIHHGERHFDSGNDWHGNPSTVPPPTNPYNPGYPYMDPNYSSGYVSQPPWQPQ.

The 151-residue stretch at 1–151 folds into the CID domain; sequence MSGIAEFDGI…SLRSKLKDAM (151 aa). 2 disordered regions span residues 151–191 and 327–398; these read MAST…RPVE and SVPL…TIPP. Position 343 is a phosphoserine (Ser343). Residues 361 to 374 show a composition bias toward low complexity; sequence PSPSHLSIPSTLPP. The RRM domain occupies 406–478; sequence RTLFLGGITR…TTIRTKWGVG (73 aa). Residues 558 to 620 form a disordered region; it reads RGRKPYRGGP…YVSQPPWQPQ (63 aa). Positions 570-580 are enriched in basic and acidic residues; sequence HHGERHFDSGN.

As to quaternary structure, interacts with rpb7.

The protein localises to the nucleus. In terms of biological role, involved in the processing of pol II transcripts. The protein is Rpb7-binding protein seb1 (seb1) of Schizosaccharomyces pombe (strain 972 / ATCC 24843) (Fission yeast).